We begin with the raw amino-acid sequence, 488 residues long: Sterol 14-demethylase (488 aa).

The chain crosses the membrane as a helical span at residues 12–32 (TGLVIVATLVIAKLIFSFFTS). Residue C433 coordinates heme.

It belongs to the cytochrome P450 family. Requires heme as cofactor. As to expression, expressed in leaves, roots, stems, siliques, flowers, flower buds and seedlings.

It is found in the membrane. The enzyme catalyses a 14alpha-methyl steroid + 3 reduced [NADPH--hemoprotein reductase] + 3 O2 = a Delta(14) steroid + formate + 3 oxidized [NADPH--hemoprotein reductase] + 4 H2O + 4 H(+). Its function is as follows. Involved in sterol biosynthesis. Catalyzes the 14-alpha demethylation of obtusifoliol to 4 alpha-methyl-5 alpha-ergosta-8,14,24(28)-trien-3 beta-ol. The protein is Sterol 14-demethylase (CYP51G1) of Arabidopsis thaliana (Mouse-ear cress).